We begin with the raw amino-acid sequence, 191 residues long: Fe/S biogenesis protein NfuA (191 aa).

Residues Cys-149 and Cys-152 each coordinate [4Fe-4S] cluster.

Belongs to the NfuA family. As to quaternary structure, homodimer. [4Fe-4S] cluster serves as cofactor.

Involved in iron-sulfur cluster biogenesis. Binds a 4Fe-4S cluster, can transfer this cluster to apoproteins, and thereby intervenes in the maturation of Fe/S proteins. Could also act as a scaffold/chaperone for damaged Fe/S proteins. The protein is Fe/S biogenesis protein NfuA of Klebsiella pneumoniae (strain 342).